The following is a 488-amino-acid chain: Proline--tRNA ligase (488 aa).

Belongs to the class-II aminoacyl-tRNA synthetase family. ProS type 3 subfamily. In terms of assembly, homodimer.

It localises to the cytoplasm. The enzyme catalyses tRNA(Pro) + L-proline + ATP = L-prolyl-tRNA(Pro) + AMP + diphosphate. Its function is as follows. Catalyzes the attachment of proline to tRNA(Pro) in a two-step reaction: proline is first activated by ATP to form Pro-AMP and then transferred to the acceptor end of tRNA(Pro). The sequence is that of Proline--tRNA ligase from Symbiobacterium thermophilum (strain DSM 24528 / JCM 14929 / IAM 14863 / T).